The primary structure comprises 39 residues: uncharacterized protein (39 aa).

The segment covering 1-16 (MLNIQPTQSIVNNQPK) has biased composition (polar residues). Residues 1–39 (MLNIQPTQSIVNNQPKSDQKKQKPADLLKEFYDKTGNRN) are disordered. Over residues 17–39 (SDQKKQKPADLLKEFYDKTGNRN) the composition is skewed to basic and acidic residues.

This is an uncharacterized protein from Dictyostelium discoideum (Social amoeba).